The sequence spans 348 residues: tRNA N6-adenosine threonylcarbamoyltransferase (348 aa).

Fe cation contacts are provided by His-119 and His-123. Substrate contacts are provided by residues 141–145, Asp-174, Gly-187, Asp-191, and Asn-280; that span reads LVSGG. Residue Asp-310 participates in Fe cation binding.

It belongs to the KAE1 / TsaD family. Fe(2+) serves as cofactor.

It localises to the cytoplasm. It carries out the reaction L-threonylcarbamoyladenylate + adenosine(37) in tRNA = N(6)-L-threonylcarbamoyladenosine(37) in tRNA + AMP + H(+). Its function is as follows. Required for the formation of a threonylcarbamoyl group on adenosine at position 37 (t(6)A37) in tRNAs that read codons beginning with adenine. Is involved in the transfer of the threonylcarbamoyl moiety of threonylcarbamoyl-AMP (TC-AMP) to the N6 group of A37, together with TsaE and TsaB. TsaD likely plays a direct catalytic role in this reaction. The protein is tRNA N6-adenosine threonylcarbamoyltransferase of Enterococcus faecalis (strain ATCC 700802 / V583).